Here is a 378-residue protein sequence, read N- to C-terminus: Cell death-related nuclease 6 (378 aa).

The signal sequence occupies residues 1-17 (MIRQIILIVSLIGISNA). N-linked (GlcNAc...) asparagine glycans are attached at residues Asn51, Asn92, and Asn111.

It belongs to the DNase II family.

In terms of biological role, involved in apoptotic DNA degradation. In Caenorhabditis elegans, this protein is Cell death-related nuclease 6 (crn-6).